We begin with the raw amino-acid sequence, 761 residues long: Elongation factor G, mitochondrial (761 aa).

The transit peptide at 1–33 (MTSVLRGVLKTHLPRTLTLPRCARNFQTTTFLR) directs the protein to the mitochondrion. Residues 66–347 (TRLRNIGISA…SVVDYLPQPN (282 aa)) enclose the tr-type G domain. Residues 75 to 82 (AHIDSGKT), 146 to 150 (DTPGH), and 200 to 203 (NKMD) each bind GTP.

It belongs to the TRAFAC class translation factor GTPase superfamily. Classic translation factor GTPase family. EF-G/EF-2 subfamily.

It localises to the mitochondrion. Its pathway is protein biosynthesis; polypeptide chain elongation. In terms of biological role, mitochondrial GTPase that catalyzes the GTP-dependent ribosomal translocation step during translation elongation. During this step, the ribosome changes from the pre-translocational (PRE) to the post-translocational (POST) state as the newly formed A-site-bound peptidyl-tRNA and P-site-bound deacylated tRNA move to the P and E sites, respectively. Catalyzes the coordinated movement of the two tRNA molecules, the mRNA and conformational changes in the ribosome. This is Elongation factor G, mitochondrial from Candida dubliniensis (strain CD36 / ATCC MYA-646 / CBS 7987 / NCPF 3949 / NRRL Y-17841) (Yeast).